A 533-amino-acid polypeptide reads, in one-letter code: MDATAFHPSLWGDFFVKYKPPTAPKRGHMTERAELLKEEVRKTLKAAANQIKNALDLIITLQRLGLDHHYENEISELLRFVYSSSDYDDKDLYVVSLRFYLLRKHGHCVSSDVFTSFKDEEGNFVVDDTKCLLSLYNAAYFRTHGEKVLDEAIAFTRRQLEASLLDPLEPALADEVHLTLQTPLFRRLRILEAINYIPIYGKEAGRNEAILELAKLNFNLAQLIYCGELKEVTLWWKQLNVETNLSFIRDRIVECHFWMTGACCEPQYSLSRVIATKMTALITVLDDMMDTYSTTEEAMLLAEAIYRWEENAAELLPGYMKDFYLYLLKTIDSCGDELGPNRSFRTFYLKEMLKVLVRGSSQEIKWRNENYVPKTISEHLEHSGPTVGAFQVACSSFVGMGDIITKESFEWLLTYPELVKSLMNIARLLNDTASTKREQNAGQHVSTVQCYMLKHGTTMDEACEKVKELTEDSWKDMMELYLTPTEHPKLIAQTIVDFARTADYMYKETDGFTFSHTIKDMIAKLFVDPISLF.

Mg(2+)-binding residues include D286, D290, N430, S434, and E438. A DDXXD motif motif is present at residues 286 to 290; that stretch reads DDMMD.

Belongs to the terpene synthase family. Mg(2+) is required as a cofactor. It depends on Co(2+) as a cofactor. Mn(2+) serves as cofactor.

The protein localises to the cytoplasm. The catalysed reaction is (2E,6E)-farnesyl diphosphate = (E)-beta-farnesene + diphosphate. The protein operates within secondary metabolite biosynthesis; terpenoid biosynthesis. Functionally, sesquiterpene cyclase catalyzing the production of beta-farnesene and alpha-bergamotene in equal amounts from farnesyl diphosphate. Involved in indirect defense by producing volatile signals attracting natural enemies of herbivores. This Zea mays subsp. huehuetenangensis (San Antonio Huista teosinte) protein is (E)-beta-farnesene synthase.